The sequence spans 46 residues: Mu-segestritoxin-Sf1g (46 aa).

4 disulfides stabilise this stretch: Cys3-Cys19, Cys10-Cys22, Cys18-Cys42, and Cys24-Cys40. The keys region for toxin activity stretch occupies residues 31–33 (RPW).

It belongs to the neurotoxin 16 (SFI) family. As to expression, expressed by the venom gland.

It is found in the secreted. Insecticidal toxin. It inhibits insect voltage-gated sodium channels (Nav) by partially blocking the channel pore in DUM neurons from the American cockroach, not by acting as a gating modifier. The inhibition is only partially reversible after prolonged washout. In vivo, the toxin causes flaccid paralysis followed by death when injected into Heliothis virescens larvae. It also causes uncoordinated movements followed by full paralysis to sheep blowflies (Lucilia cuprina). When the toxin is fused to snowdrop lectin, it is orally active against larvae of the tomato moth (Laconobia oleracea), the rice brown planthopper (Nilaparvata lugens), and the peach-potato aphid (Myzus persicae). The chain is Mu-segestritoxin-Sf1g from Segestria florentina (Tube-web spider).